Consider the following 536-residue polypeptide: CTP synthase (536 aa).

The tract at residues 1–267 (MSKFVFVTGG…CKETLKYLEL (267 aa)) is amidoligase domain. Ser13 contributes to the CTP binding site. Ser13 provides a ligand contact to UTP. Residues 14–19 (SIGKGI) and Asp71 each bind ATP. 2 residues coordinate Mg(2+): Asp71 and Glu141. Residues 148-150 (DIE), 188-193 (KTKPTQ), and Lys224 each bind CTP. UTP is bound by residues 188–193 (KTKPTQ) and Lys224. The region spanning 292 to 534 (KVALVGKYIE…IKSSQENLTQ (243 aa)) is the Glutamine amidotransferase type-1 domain. Residue Gly354 participates in L-glutamine binding. Cys381 serves as the catalytic Nucleophile; for glutamine hydrolysis. Residues 382-385 (LGMQ), Glu405, and Arg462 each bind L-glutamine. Catalysis depends on residues His507 and Glu509.

It belongs to the CTP synthase family. Homotetramer.

It catalyses the reaction UTP + L-glutamine + ATP + H2O = CTP + L-glutamate + ADP + phosphate + 2 H(+). The enzyme catalyses L-glutamine + H2O = L-glutamate + NH4(+). The catalysed reaction is UTP + NH4(+) + ATP = CTP + ADP + phosphate + 2 H(+). Its pathway is pyrimidine metabolism; CTP biosynthesis via de novo pathway; CTP from UDP: step 2/2. Allosterically activated by GTP, when glutamine is the substrate; GTP has no effect on the reaction when ammonia is the substrate. The allosteric effector GTP functions by stabilizing the protein conformation that binds the tetrahedral intermediate(s) formed during glutamine hydrolysis. Inhibited by the product CTP, via allosteric rather than competitive inhibition. Catalyzes the ATP-dependent amination of UTP to CTP with either L-glutamine or ammonia as the source of nitrogen. Regulates intracellular CTP levels through interactions with the four ribonucleotide triphosphates. This chain is CTP synthase, found in Prochlorococcus marinus (strain MIT 9312).